The chain runs to 575 residues: Serine/threonine-protein phosphatase 2A regulatory subunit B'' subunit beta (575 aa).

A disordered region spans residues 41–131 (APGRDQPTPG…SQSIPTFYFP (91 aa)). Residues 388–423 (KTPTSIEYWFRCMDLDGDGALSMFELEYFYEEQCRR) form the EF-hand domain. 4 residues coordinate Ca(2+): aspartate 401, aspartate 403, aspartate 405, and glutamate 412.

As to quaternary structure, PP2A consists of a common heterodimeric core enzyme, composed of a 36 kDa catalytic subunit (subunit C) and a 65 kDa constant regulatory subunit (PR65 or subunit A), that associates with a variety of regulatory subunits. Proteins that associate with the core dimer include three families of regulatory subunits B (the R2/B/PR55/B55, R3/B''/PR72/PR130/PR59 and R5/B'/B56 families), the 48 kDa variable regulatory subunit, viral proteins, and cell signaling molecules. Interacts with N-terminal region of CDC6. Interacts with NOD2.

It localises to the nucleus. In terms of biological role, the B regulatory subunit might modulate substrate selectivity and catalytic activity, and might also direct the localization of the catalytic enzyme to a particular subcellular compartment. This is Serine/threonine-protein phosphatase 2A regulatory subunit B'' subunit beta (PPP2R3B) from Homo sapiens (Human).